A 353-amino-acid polypeptide reads, in one-letter code: DNA integrity scanning protein DisA (353 aa).

Residues 6 to 144 (DKELMNILKI…GGIKYVLRDS (139 aa)) enclose the DAC domain. Residues Gly73, Leu91, and 104–108 (TRHRT) contribute to the ATP site.

It belongs to the DisA family. In terms of assembly, homooctamer. Mg(2+) serves as cofactor.

The enzyme catalyses 2 ATP = 3',3'-c-di-AMP + 2 diphosphate. Its function is as follows. Participates in a DNA-damage check-point that is active prior to asymmetric division when DNA is damaged. DisA forms globular foci that rapidly scan along the chromosomes during sporulation, searching for lesions. When a lesion is present, DisA pauses at the lesion site. This triggers a cellular response that culminates in a temporary block in sporulation initiation. Also has diadenylate cyclase activity, catalyzing the condensation of 2 ATP molecules into cyclic di-AMP (c-di-AMP). c-di-AMP acts as a signaling molecule that couples DNA integrity with progression of sporulation. The rise in c-di-AMP level generated by DisA while scanning the chromosome, operates as a positive signal that advances sporulation; upon encountering a lesion, the DisA focus arrests at the damaged site and halts c-di-AMP synthesis. The chain is DNA integrity scanning protein DisA from Clostridium botulinum (strain 657 / Type Ba4).